We begin with the raw amino-acid sequence, 474 residues long: MESKALLLVALGVWLQSLTAFRGGVAAADGGRDFSDIESKFALRTPEDTAEDTCHLIPGLADSVSNCHFNHSSKTFVVIHGWTVTGMYESWVPKLVAALYKREPDSNVIVVDWLYRAQQHYPVSAGYTKLVGNDVARFINWLEEEFNYPLDNVHLLGYSLGAHAAGVAGSLTNKKVNRITGLDPAGPNFEYAEAPSRLSPDDADFVDVLHTFTRGSPGRSIGIQKPVGHVDIYPNGGTFQPGCNIGEAIRVIAEKGLGDVDQLVKCSHERSIHLFIDSLLNEENPSKAYRCNSKEAFEKGLCLSCRKNRCNNVGYEINKVRAKRSSKMYLKTRSQMPYKVFHYQVKIHFSGTENDKQNNQAFEISLYGTVAESENIPFTLPEVATNKTYSFLIYTEVDIGELLMMKLKWKNDSYFRWSDWWSSPSFVIEKIRVKAGETQKKVIFCAREKVSHLQKGKDAAVFVKCHDKSLKKSG.

The N-terminal stretch at 1 to 27 (MESKALLLVALGVWLQSLTAFRGGVAA) is a signal peptide. An interaction with GPIHBP1 region spans residues 32–53 (RDFSDIESKFALRTPEDTAEDT). Cys-54 and Cys-67 are joined by a disulfide. N-linked (GlcNAc...) asparagine glycosylation occurs at Asn-70. Tyr-121 bears the 3'-nitrotyrosine mark. The active-site Nucleophile is the Ser-159. Asp-183 (charge relay system) is an active-site residue. Tyr-191 is subject to 3'-nitrotyrosine. Residues Ala-194, Arg-197, Ser-199, and Asp-202 each coordinate Ca(2+). A disulfide bridge connects residues Cys-243 and Cys-266. The tract at residues 243-266 (CNIGEAIRVIAEKGLGDVDQLVKC) is essential for determining substrate specificity. His-268 serves as the catalytic Charge relay system. 2 disulfide bridges follow: Cys-291/Cys-310 and Cys-302/Cys-305. A PLAT domain is found at 341–464 (FHYQVKIHFS…KGKDAAVFVK (124 aa)). At Tyr-343 the chain carries 3'-nitrotyrosine. N-linked (GlcNAc...) asparagine glycosylation occurs at Asn-386. Residues 417–421 (WSDWW) are important for interaction with lipoprotein particles. The tract at residues 430–434 (KIRVK) is important for heparin binding. The tract at residues 443 to 467 (IFCAREKVSHLQKGKDAAVFVKCHD) is interaction with GPIHBP1. Cys-445 and Cys-465 form a disulfide bridge.

It belongs to the AB hydrolase superfamily. Lipase family. As to quaternary structure, homodimer. Interacts with GPIHBP1 with 1:1 stoichiometry. Interacts with APOC2; the interaction activates LPL activity in the presence of lipids. Interaction with heparan sulfate proteoglycans is required to protect LPL against loss of activity. Associates with lipoprotein particles in blood plasma. Interacts with LMF1 and SEL1L; interaction with SEL1L is required to prevent aggregation of newly synthesized LPL in the endoplasmic reticulum (ER), and for normal export of LPL from the ER to the extracellular space. Interacts with SORL1; SORL1 acts as a sorting receptor, promoting LPL localization to endosomes and later to lysosomes, leading to degradation of newly synthesized LPL. In terms of processing, tyrosine nitration after lipopolysaccharide (LPS) challenge down-regulates the lipase activity.

The protein resides in the cell membrane. The protein localises to the secreted. It is found in the extracellular space. Its subcellular location is the extracellular matrix. The enzyme catalyses a triacylglycerol + H2O = a diacylglycerol + a fatty acid + H(+). It catalyses the reaction a 1,2-diacyl-sn-glycero-3-phosphocholine + H2O = a 2-acyl-sn-glycero-3-phosphocholine + a fatty acid + H(+). It carries out the reaction 1,2,3-tri-(9Z-octadecenoyl)-glycerol + H2O = di-(9Z)-octadecenoylglycerol + (9Z)-octadecenoate + H(+). The catalysed reaction is 1,2-di-(9Z-octadecenoyl)-sn-glycero-3-phosphocholine + H2O = (9Z-octadecenoyl)-sn-glycero-3-phosphocholine + (9Z)-octadecenoate + H(+). The enzyme catalyses 1,2,3-tributanoylglycerol + H2O = dibutanoylglycerol + butanoate + H(+). It catalyses the reaction 1,2-dihexadecanoyl-sn-glycero-3-phosphocholine + H2O = hexadecanoyl-sn-glycero-3-phosphocholine + hexadecanoate + H(+). The apolipoprotein APOC2 acts as a coactivator of LPL activity. Ca(2+) binding promotes protein stability and formation of the active homodimer. Interaction with GPIHBP1 protects LPL against inactivation by ANGPTL4. Its function is as follows. Key enzyme in triglyceride metabolism. Catalyzes the hydrolysis of triglycerides from circulating chylomicrons and very low density lipoproteins (VLDL), and thereby plays an important role in lipid clearance from the blood stream, lipid utilization and storage. Although it has both phospholipase and triglyceride lipase activities it is primarily a triglyceride lipase with low but detectable phospholipase activity. Mediates margination of triglyceride-rich lipoprotein particles in capillaries. Recruited to its site of action on the luminal surface of vascular endothelium by binding to GPIHBP1 and cell surface heparan sulfate proteoglycans. The polypeptide is Lipoprotein lipase (Lpl) (Rattus norvegicus (Rat)).